The following is a 192-amino-acid chain: Fe/S biogenesis protein NfuA (192 aa).

Positions 150 and 153 each coordinate [4Fe-4S] cluster.

The protein belongs to the NfuA family. As to quaternary structure, homodimer. [4Fe-4S] cluster is required as a cofactor.

Functionally, involved in iron-sulfur cluster biogenesis. Binds a 4Fe-4S cluster, can transfer this cluster to apoproteins, and thereby intervenes in the maturation of Fe/S proteins. Could also act as a scaffold/chaperone for damaged Fe/S proteins. In Buchnera aphidicola subsp. Acyrthosiphon pisum (strain 5A), this protein is Fe/S biogenesis protein NfuA.